The following is a 156-amino-acid chain: Ribosomal RNA large subunit methyltransferase H (156 aa).

S-adenosyl-L-methionine-binding positions include Leu-73, Gly-104, and 123–128 (VSSLTL).

Belongs to the RNA methyltransferase RlmH family. Homodimer.

Its subcellular location is the cytoplasm. It catalyses the reaction pseudouridine(1915) in 23S rRNA + S-adenosyl-L-methionine = N(3)-methylpseudouridine(1915) in 23S rRNA + S-adenosyl-L-homocysteine + H(+). Functionally, specifically methylates the pseudouridine at position 1915 (m3Psi1915) in 23S rRNA. The polypeptide is Ribosomal RNA large subunit methyltransferase H (Paraburkholderia xenovorans (strain LB400)).